We begin with the raw amino-acid sequence, 491 residues long: Glycogen synthase (491 aa).

Arginine 20 contacts ADP-alpha-D-glucose.

The protein belongs to the glycosyltransferase 1 family. Bacterial/plant glycogen synthase subfamily.

The enzyme catalyses [(1-&gt;4)-alpha-D-glucosyl](n) + ADP-alpha-D-glucose = [(1-&gt;4)-alpha-D-glucosyl](n+1) + ADP + H(+). Its pathway is glycan biosynthesis; glycogen biosynthesis. Its function is as follows. Synthesizes alpha-1,4-glucan chains using ADP-glucose. The sequence is that of Glycogen synthase from Prosthecochloris aestuarii (strain DSM 271 / SK 413).